The chain runs to 435 residues: Adenylosuccinate synthetase (435 aa).

GTP is bound by residues 13–19 (GDEGKGK) and 41–43 (GHT). Asp14 serves as the catalytic Proton acceptor. Residues Asp14 and Gly41 each contribute to the Mg(2+) site. IMP-binding positions include 14-17 (DEGK), 39-42 (NAGH), Thr131, Arg145, Gln226, Thr241, and Arg309. His42 functions as the Proton donor in the catalytic mechanism. A substrate-binding site is contributed by 305–311 (TVTGRKR). GTP is bound by residues Arg311, 337-339 (KLD), and 419-421 (STG).

This sequence belongs to the adenylosuccinate synthetase family. In terms of assembly, homodimer. Mg(2+) serves as cofactor.

It localises to the cytoplasm. It catalyses the reaction IMP + L-aspartate + GTP = N(6)-(1,2-dicarboxyethyl)-AMP + GDP + phosphate + 2 H(+). It functions in the pathway purine metabolism; AMP biosynthesis via de novo pathway; AMP from IMP: step 1/2. Functionally, plays an important role in the de novo pathway of purine nucleotide biosynthesis. Catalyzes the first committed step in the biosynthesis of AMP from IMP. This chain is Adenylosuccinate synthetase, found in Dechloromonas aromatica (strain RCB).